The chain runs to 239 residues: Serine protease SplF (239 aa).

An N-terminal signal peptide occupies residues 1-36 (MNKNIIIKSIAALTILTSVTGVGTTMVEGIQQTAKA). Active-site charge relay system residues include H75, D114, and S192.

The protein belongs to the peptidase S1B family.

The protein localises to the secreted. In Staphylococcus aureus (strain Mu50 / ATCC 700699), this protein is Serine protease SplF (splF).